We begin with the raw amino-acid sequence, 69 residues long: Beta-defensin 122 (69 aa).

The signal sequence occupies residues 1-19 (MKPFLVTLAVLLLFFQVTA). 3 disulfides stabilise this stretch: Cys26–Cys53, Cys33–Cys47, and Cys37–Cys54.

The protein belongs to the beta-defensin family.

It localises to the secreted. In terms of biological role, has antibacterial activity. The protein is Beta-defensin 122 (DEFB122) of Macaca mulatta (Rhesus macaque).